A 186-amino-acid chain; its full sequence is Peptide deformylase (186 aa).

2 residues coordinate Fe cation: C99 and H141. The active site involves E142. H145 lines the Fe cation pocket.

Belongs to the polypeptide deformylase family. It depends on Fe(2+) as a cofactor.

The enzyme catalyses N-terminal N-formyl-L-methionyl-[peptide] + H2O = N-terminal L-methionyl-[peptide] + formate. Removes the formyl group from the N-terminal Met of newly synthesized proteins. Requires at least a dipeptide for an efficient rate of reaction. N-terminal L-methionine is a prerequisite for activity but the enzyme has broad specificity at other positions. The chain is Peptide deformylase from Chlamydia felis (strain Fe/C-56) (Chlamydophila felis).